The primary structure comprises 126 residues: Aspartate 1-decarboxylase (126 aa).

Catalysis depends on serine 25, which acts as the Schiff-base intermediate with substrate; via pyruvic acid. Serine 25 carries the post-translational modification Pyruvic acid (Ser). Threonine 57 provides a ligand contact to substrate. Tyrosine 58 functions as the Proton donor in the catalytic mechanism. Residue 73 to 75 (GAA) participates in substrate binding.

Belongs to the PanD family. Heterooctamer of four alpha and four beta subunits. Pyruvate is required as a cofactor. Is synthesized initially as an inactive proenzyme, which is activated by self-cleavage at a specific serine bond to produce a beta-subunit with a hydroxyl group at its C-terminus and an alpha-subunit with a pyruvoyl group at its N-terminus.

It localises to the cytoplasm. It carries out the reaction L-aspartate + H(+) = beta-alanine + CO2. It functions in the pathway cofactor biosynthesis; (R)-pantothenate biosynthesis; beta-alanine from L-aspartate: step 1/1. In terms of biological role, catalyzes the pyruvoyl-dependent decarboxylation of aspartate to produce beta-alanine. The polypeptide is Aspartate 1-decarboxylase (Psychrobacter sp. (strain PRwf-1)).